Reading from the N-terminus, the 63-residue chain is UPF0434 protein BAV2101 (63 aa).

The protein belongs to the UPF0434 family.

In Bordetella avium (strain 197N), this protein is UPF0434 protein BAV2101.